The sequence spans 169 residues: Cyclic pyranopterin monophosphate synthase (169 aa).

Residues 83–85 (LCH) and 121–122 (ME) contribute to the substrate site. The active site involves Asp136.

This sequence belongs to the MoaC family. In terms of assembly, homohexamer; trimer of dimers.

The enzyme catalyses (8S)-3',8-cyclo-7,8-dihydroguanosine 5'-triphosphate = cyclic pyranopterin phosphate + diphosphate. Its pathway is cofactor biosynthesis; molybdopterin biosynthesis. In terms of biological role, catalyzes the conversion of (8S)-3',8-cyclo-7,8-dihydroguanosine 5'-triphosphate to cyclic pyranopterin monophosphate (cPMP). The chain is Cyclic pyranopterin monophosphate synthase from Rhodospirillum centenum (strain ATCC 51521 / SW).